The following is a 276-amino-acid chain: Urease accessory protein UreD (276 aa).

Belongs to the UreD family. As to quaternary structure, ureD, UreF and UreG form a complex that acts as a GTP-hydrolysis-dependent molecular chaperone, activating the urease apoprotein by helping to assemble the nickel containing metallocenter of UreC. The UreE protein probably delivers the nickel.

It is found in the cytoplasm. Required for maturation of urease via the functional incorporation of the urease nickel metallocenter. The chain is Urease accessory protein UreD from Polaromonas naphthalenivorans (strain CJ2).